Consider the following 405-residue polypeptide: Scramblase ANY1 (405 aa).

Residues 1–51 (MSTTGPLDATLIRDVAVATATKASYDMSDTLYSYLPKVDQFYIPEWLTMQF) lie on the Cytoplasmic side of the membrane. A helical transmembrane segment spans residues 52-72 (IANNLISFTPLFSYGTTIISI). The Lumenal portion of the chain corresponds to 73 to 76 (EKCK). The helical transmembrane segment at 77–97 (TALGFSIDICATMLIASILRI) threads the bilayer. The Cytoplasmic portion of the chain corresponds to 98-103 (SYYLIT). Residues 104-124 (PYEITLLRQSLVMIFIQLILL) form a helical membrane-spanning segment. Residues 125–177 (RTSLKYRPDEYKYQNLTDVESLSHLIHDIWFEFFSCINRPKFLSEDWKNLIKS) lie on the Lumenal side of the membrane. Residues 178–198 (LSFTNLLKFSFKIFLAFFYKI) form a helical membrane-spanning segment. The Cytoplasmic segment spans residues 199 to 223 (LKFFDPNFKRIGAFWQWDDDKNFWR). Residues 224–244 (FLALFATVQILVTFFISNILN) form a helical membrane-spanning segment. Over 245–254 (WDSLAQGLGS) the chain is Lumenal. The PQ-loop domain occupies 252-309 (LGSIIGSLGLLVESLLPLPQIAILYKLKSVQGFKLILLVSWLCGDTLKITYLIFGAKN). The chain crosses the membrane as a helical span at residues 255–275 (IIGSLGLLVESLLPLPQIAIL). Over 276–283 (YKLKSVQG) the chain is Cytoplasmic. Residues 284 to 306 (FKLILLVSWLCGDTLKITYLIFG) form a helical membrane-spanning segment. The Lumenal segment spans residues 307-312 (AKNISA). Residues 313–335 (LFVIFALFQMSLDFYIGGQYIYY) form a helical membrane-spanning segment. Residues 336–405 (RYYYPKLRHQ…GKSQAQAVTL (70 aa)) lie on the Cytoplasmic side of the membrane. The disordered stretch occupies residues 379 to 405 (LKQDSNDTSDSPQDDQVGKSQAQAVTL). A compositionally biased stretch (polar residues) spans 396–405 (GKSQAQAVTL).

As to quaternary structure, interacts with NEO1.

The protein resides in the golgi apparatus membrane. It is found in the late endosome membrane. Functionally, phospholipid scramblase that transports phosphatidylserine (PS) and phosphatidylethalonamine (PE) bidirectionally from one leaflet to the other of the phospholipid bilayer to at least partially collapse the membrane asymmetry established by NEO1 and other flippases. The PS scramblase activity has been disputed. Functions in the trafficking pathway from endosomes to the trans-Golgi network (TGN). The sequence is that of Scramblase ANY1 from Saccharomyces cerevisiae (strain ATCC 204508 / S288c) (Baker's yeast).